The sequence spans 210 residues: Putative protein-lysine deacylase ABHD14B (210 aa).

Ala2 carries the post-translational modification N-acetylalanine. Ser91 bears the Phosphoserine mark. Active-site charge relay system residues include Ser111, Asp162, and His188.

Belongs to the AB hydrolase superfamily. ABHD14 family. As to quaternary structure, may interact with TAF1. Ubiquitous. Detected in spleen, thymus, prostate, testis, ovary, small intestine, colon, peripheral blood leukocyte, heart, placenta, lung, liver, skeletal muscle, pancreas and kidney.

Its subcellular location is the cytoplasm. It localises to the nucleus. The enzyme catalyses L-lysyl-[protein] + acetyl-CoA = N(6)-acetyl-L-lysyl-[protein] + CoA + H(+). Its function is as follows. Acts as an atypical protein-lysine deacetylase in vitro. Catalyzes the deacetylation of lysine residues using CoA as substrate, generating acetyl-CoA and the free amine of protein-lysine residues. Additional experiments are however required to confirm the protein-lysine deacetylase activity in vivo. Has hydrolase activity towards various surrogate p-nitrophenyl (pNp) substrates, such as pNp-butyrate, pNp-acetate and pNp-octanoate in vitro, with a strong preference for pNp-acetate. May activate transcription. This is Putative protein-lysine deacylase ABHD14B from Homo sapiens (Human).